The chain runs to 394 residues: Probable 6-phosphogluconolactonase ARB_02015 (394 aa).

A signal peptide spans 1 to 21 (MKTVPFLSLLQAGILTSGIVA). N-linked (GlcNAc...) asparagine glycosylation is present at asparagine 51.

Belongs to the cycloisomerase 2 family.

Its subcellular location is the secreted. The catalysed reaction is 6-phospho-D-glucono-1,5-lactone + H2O = 6-phospho-D-gluconate + H(+). The protein operates within carbohydrate degradation; pentose phosphate pathway; D-ribulose 5-phosphate from D-glucose 6-phosphate (oxidative stage): step 2/3. Catalyzes the hydrolysis of 6-phosphogluconolactone to 6-phosphogluconate. This is Probable 6-phosphogluconolactonase ARB_02015 from Arthroderma benhamiae (strain ATCC MYA-4681 / CBS 112371) (Trichophyton mentagrophytes).